We begin with the raw amino-acid sequence, 249 residues long: Low affinity immunoglobulin gamma Fc region receptor III-A (249 aa).

A signal peptide spans 1–20 (MWQLLLPTALVLTAFSGIQA). Over 21–203 (GLQKAVVNLD…SPSMFPPWHQ (183 aa)) the chain is Extracellular. Ig-like C2-type domains follow at residues 22 to 102 (LQKA…VQLE) and 119 to 188 (EGDP…FRIS). 2 disulfides stabilise this stretch: cysteine 46–cysteine 88 and cysteine 127–cysteine 171. Asparagine 62, asparagine 164, and asparagine 179 each carry an N-linked (GlcNAc...) asparagine glycan. A helical membrane pass occupies residues 204 to 224 (ITFCLLIGLLFAIDTVLYFSV). Residues 225–249 (RRGLQSPVADYEEPKIQWSKEPQDK) are Cytoplasmic-facing. Tyrosine 235 bears the Phosphotyrosine mark.

As to quaternary structure, forms a heterooligomeric complex with ITAM-containing signaling subunits FCER1G. Interacts (via transmembrane domain) with signaling subunits; this interaction is a prerequisite for receptor complex expression on the cell surface and intracellular signal transduction. Binds the Fc region of antigen-complexed IgG. Post-translationally, N-glycosylated. Phosphorylated following receptor ligation. As to expression, detected on myeloid cells, peripheral blood monocytes, splenic and bone marrow dendritic cells, and thioglycollate-elicited macrophages and neutrophils but absent from lymphoid populations with no expression observed on T cells, B cells, NK cells or other granulocytes (at protein level). Expressed in peripheral blood leukocytes, spleen, liver, thymus and small intestine. Expressed in splenic dendritic cell subsets (at protein level).

The protein resides in the cell membrane. Its function is as follows. Receptor for the invariable Fc fragment of immunoglobulin gamma (IgG). Binds with intermediate affinity to both IgG2a and IgG2b. Can bind to IgG2a and IgG2b monomers. Does not display binding to IgG1 or IgG3. Recognizes neutralizing virus-specific IgGs displayed on the cell surface of infected cells and triggers antibody-dependent cellular cytotoxicity (ADCC). Confers protection to lethal influenza virus infection. On splenic dendritic cells, uptakes antigen immune complexes and efficiently divert them into MHC class I and II antigen presentation pathways to provide for superior priming of CD4-positive and CD8-positive T cell immune responses. Mediates neutrophil activation by IgG complexes redundantly with FCGR2A. Plays a role in promoting bone resorption by enhancing osteoclast differentiation following binding to IgG2a. Also acts as a receptor for the Fc region of immunoglobulin epsilon (IgE). Binds with low affinity to both the a and b allotypes of IgE. Has also been shown to bind to IgE allotype a only but not to allotype b. Binds aggregated IgE but not the monomeric form and bound monomeric IgG is readily displaced by IgE complexes. Binding to IgE promotes macrophage-mediated phagocytosis, antigen presentation to T cells, production of pro-inflammatory cytokines and the late phase of cutaneous allergic reactions. Mediates enhanced ADCC in response to afucosylated IgGs. This is Low affinity immunoglobulin gamma Fc region receptor III-A from Mus musculus (Mouse).